The sequence spans 399 residues: MSQYRTFTASDAVAYAQQFGGLSAPEALVSAQEVGDGNLNLVFKIFDKQGISRIVVKQALPYVRCVGESWPLTLDRARLEAQTLVAHYQHCPAHTVKIHHYDPTLAVMVMEDLSDHRIWRGELIKGVHYPQAARQLGEYLAQTLFHTSDFYLHPHAKKAEVARFINPEMCEITEDLFFNDPYQVHERNNYPAELEADVAALRDDAALKCAVAALKHRFFSHAEALLHGDIHSGSIFVADGSLKAIDAEFGYFGPVGFDVGTAIGNLLLNYCGAPGQLGIREAADAREQRLIDIATLWHTFAERFQTLAREKTRDAALAEPGYASEFLKKVWADAIGFAGTELIRRSVGLSHVADIDTIRDEEMKLSCLRHAIGLGKALILLAPRIENADEFIARVRQYG.

ATP-binding positions include N40, K57, and 111–113 (EDL). D229 is a binding site for substrate. 246 to 248 (DAE) lines the ATP pocket. Residue R344 coordinates substrate.

This sequence belongs to the methylthioribose kinase family. Homodimer.

The enzyme catalyses 5-(methylsulfanyl)-D-ribose + ATP = 5-(methylsulfanyl)-alpha-D-ribose 1-phosphate + ADP + H(+). Its pathway is amino-acid biosynthesis; L-methionine biosynthesis via salvage pathway; S-methyl-5-thio-alpha-D-ribose 1-phosphate from S-methyl-5'-thioadenosine (hydrolase route): step 2/2. Its function is as follows. Catalyzes the phosphorylation of methylthioribose into methylthioribose-1-phosphate. This is Methylthioribose kinase from Cronobacter sakazakii (strain ATCC BAA-894) (Enterobacter sakazakii).